A 26-amino-acid polypeptide reads, in one-letter code: AMP deaminase 1 (26 aa).

It belongs to the metallo-dependent hydrolases superfamily. Adenosine and AMP deaminases family. Homotetramer.

The catalysed reaction is AMP + H2O + H(+) = IMP + NH4(+). Its pathway is purine metabolism; IMP biosynthesis via salvage pathway; IMP from AMP: step 1/1. In terms of biological role, AMP deaminase plays a critical role in energy metabolism. The chain is AMP deaminase 1 (AMPD1) from Gallus gallus (Chicken).